A 248-amino-acid chain; its full sequence is Adenosylcobinamide-GDP ribazoletransferase (248 aa).

Helical transmembrane passes span 24–44 (EVNL…IGAW), 47–67 (LVFT…AGLF), 70–90 (IIIT…GLFS), 106–126 (VGAN…ALFL), 134–154 (IGWL…LLFA), 165–185 (LGSI…LFVL), 186–206 (FILG…VILF), and 228–248 (AGGQ…WGLI).

This sequence belongs to the CobS family. The cofactor is Mg(2+).

The protein resides in the cell membrane. The enzyme catalyses alpha-ribazole + adenosylcob(III)inamide-GDP = adenosylcob(III)alamin + GMP + H(+). It carries out the reaction alpha-ribazole 5'-phosphate + adenosylcob(III)inamide-GDP = adenosylcob(III)alamin 5'-phosphate + GMP + H(+). It participates in cofactor biosynthesis; adenosylcobalamin biosynthesis; adenosylcobalamin from cob(II)yrinate a,c-diamide: step 7/7. Functionally, joins adenosylcobinamide-GDP and alpha-ribazole to generate adenosylcobalamin (Ado-cobalamin). Also synthesizes adenosylcobalamin 5'-phosphate from adenosylcobinamide-GDP and alpha-ribazole 5'-phosphate. This is Adenosylcobinamide-GDP ribazoletransferase from Listeria welshimeri serovar 6b (strain ATCC 35897 / DSM 20650 / CCUG 15529 / CIP 8149 / NCTC 11857 / SLCC 5334 / V8).